The following is a 273-amino-acid chain: Pre-mRNA-splicing factor CWC23 (273 aa).

Positions 15–87 (DLYALLEVSI…SLRATYNRWL (73 aa)) constitute a J domain.

It belongs to the DnaJ family. Associated with the spliceosome.

The protein localises to the cytoplasm. Its subcellular location is the nucleus. In terms of biological role, involved in pre-mRNA splicing. May be involved in endoplasmic reticulum-associated protein degradation (ERAD) and required for growth at low and high temperatures. This Eremothecium gossypii (strain ATCC 10895 / CBS 109.51 / FGSC 9923 / NRRL Y-1056) (Yeast) protein is Pre-mRNA-splicing factor CWC23 (CWC23).